The primary structure comprises 565 residues: Oxygen-dependent choline dehydrogenase (565 aa).

An FAD-binding site is contributed by 7-36 (DYIICGAGSAGNVLATRLTEDPGVTVLLLE). Histidine 474 serves as the catalytic Proton acceptor.

It belongs to the GMC oxidoreductase family. Requires FAD as cofactor.

The enzyme catalyses choline + A = betaine aldehyde + AH2. The catalysed reaction is betaine aldehyde + NAD(+) + H2O = glycine betaine + NADH + 2 H(+). Its pathway is amine and polyamine biosynthesis; betaine biosynthesis via choline pathway; betaine aldehyde from choline (cytochrome c reductase route): step 1/1. Its function is as follows. Involved in the biosynthesis of the osmoprotectant glycine betaine. Catalyzes the oxidation of choline to betaine aldehyde and betaine aldehyde to glycine betaine at the same rate. In Burkholderia pseudomallei (strain K96243), this protein is Oxygen-dependent choline dehydrogenase.